Here is a 299-residue protein sequence, read N- to C-terminus: tRNA dimethylallyltransferase (299 aa).

Residue 11–18 (GPTAVGKT) participates in ATP binding. Residue 13–18 (TAVGKT) coordinates substrate. The interval 36-39 (DSQQ) is interaction with substrate tRNA.

Belongs to the IPP transferase family. In terms of assembly, monomer. Requires Mg(2+) as cofactor.

It carries out the reaction adenosine(37) in tRNA + dimethylallyl diphosphate = N(6)-dimethylallyladenosine(37) in tRNA + diphosphate. Its function is as follows. Catalyzes the transfer of a dimethylallyl group onto the adenine at position 37 in tRNAs that read codons beginning with uridine, leading to the formation of N6-(dimethylallyl)adenosine (i(6)A). The polypeptide is tRNA dimethylallyltransferase (Streptococcus pyogenes serotype M1).